Here is a 234-residue protein sequence, read N- to C-terminus: Small ribosomal subunit protein eS4 (234 aa).

Residues 38-99 (IPLLIALRDY…GNDYLVSYDR (62 aa)) form the S4 RNA-binding; degenerate domain.

Belongs to the eukaryotic ribosomal protein eS4 family.

In Picrophilus torridus (strain ATCC 700027 / DSM 9790 / JCM 10055 / NBRC 100828 / KAW 2/3), this protein is Small ribosomal subunit protein eS4 (rps4e).